The following is a 765-amino-acid chain: MDPVATHSCHLLQQLHEQRIQGLLCDCMLVVKGVCFKAHKNVLAAFSQYFRSLFQNSSSQKNDVFHLDVKNVSGIGQILDFMYTSHLDLNQDNIQVMLDTAQCLQVQNVLSLCHTFLKSATVVQPPGMPCNSTLSLQSTLTPDATCVISENYPPHLLQECSADAQQNKTLDESHPHASPSVNRHHSAGEISKQAPDTSDGSCTELPFKQPNYYYKLRNFYSKQYHKHAAGPSQERVVEQPFAFSTSTDLTTVESQPCAVSHSECILESPEHLPSNFLAQPVNDSAPHPESDATCQQPVKQMRLKKAIHLKKLNFLKSQKYAEQVSEPKSDDGLTKRLESASKNTLEKASSQSAEEKESEEVVSCENFNCISETERPEDPAALEDQSQTLQSQRQYACELCGKPFKHPSNLELHKRSHTGEKPFECNICGKHFSQAGNLQTHLRRHSGEKPYICEICGKRFAASGDVQRHIIIHSGEKPHLCDICGRGFSNFSNLKEHKKTHTADKVFTCDECGKSFNMQRKLVKHRIRHTGERPYSCSACGKCFGGSGDLRRHVRTHTGEKPYTCEICNKCFTRSAVLRRHKKMHCKAGDESPDVLEELSQAIETSDLEKSQSSDSFSQDTSVTLMPVSVKLPVHPVENSVAEFDSHSGGSYCKLRSMIQPHGVSDQEKLSLDPGKLAKPQMQQTQPQAYAYSDVDTPAGGEPLQADGMAMIRSSLAALDNHGGDPLGSRASSTTYRNSEGQFFSSMTLWGLAMKTLQNENELDQ.

Residues 25 to 91 (CDCMLVVKGV…MYTSHLDLNQ (67 aa)) form the BTB domain. Disordered stretches follow at residues 165–203 (QQNKTLDESHPHASPSVNRHHSAGEISKQAPDTSDGSCT) and 275–294 (NFLAQPVNDSAPHPESDATC). 7 C2H2-type zinc fingers span residues 395–417 (YACELCGKPFKHPSNLELHKRSH), 423–445 (FECNICGKHFSQAGNLQTHLRRH), 451–473 (YICEICGKRFAASGDVQRHIIIH), 479–501 (HLCDICGRGFSNFSNLKEHKKTH), 507–529 (FTCDECGKSFNMQRKLVKHRIRH), 535–557 (YSCSACGKCFGGSGDLRRHVRTH), and 563–585 (YTCEICNKCFTRSAVLRRHKKMH).

It belongs to the krueppel C2H2-type zinc-finger protein family. Isoform 1 interacts with EP300 and KAT5/Tip60. The interaction with EP300 is direct and leads to synergistic induction of CDKN1A. On the CDKN1A promoter, forms a complex with ZBTB17/Miz-1; this interaction leads to additive CDKN1A transactivation. Isoform 3 also interacts with ZBTB17; this interaction may block ZBTB17 repressor activity. As to expression, highly expressed in normal epidermis and in other epithelial tissues, including in colon and lung. Tends to be down-regulated in colon, lung and skin cancer tissues.

It localises to the cytoplasm. The protein resides in the nucleus. Transcription factor. Inhibits cell proliferation by activating either CDKN1A/p21 transcription or RB1 transcription. In terms of biological role, binds CDKN1A promoter and activates its transcription; this activity is further potentiated in the presence of EP300 (synergistic) and ZBTB17/Miz-1 (additive). Functionally, activates RB1 transcription most probably by antagonizing ZBTB17 repression of RB1. Does not bind directly RB1 promoter. The polypeptide is Zinc finger and BTB domain-containing protein 49 (ZBTB49) (Homo sapiens (Human)).